The chain runs to 445 residues: Phosphoglucosamine mutase (445 aa).

Residue Ser105 is the Phosphoserine intermediate of the active site. Residues Ser105, Asp244, Asp246, and Asp248 each contribute to the Mg(2+) site. Ser105 carries the phosphoserine modification.

The protein belongs to the phosphohexose mutase family. Requires Mg(2+) as cofactor. Post-translationally, activated by phosphorylation.

It catalyses the reaction alpha-D-glucosamine 1-phosphate = D-glucosamine 6-phosphate. In terms of biological role, catalyzes the conversion of glucosamine-6-phosphate to glucosamine-1-phosphate. This Janthinobacterium sp. (strain Marseille) (Minibacterium massiliensis) protein is Phosphoglucosamine mutase.